Here is a 496-residue protein sequence, read N- to C-terminus: Glycylpeptide N-tetradecanoyltransferase 1 (496 aa).

Residues 1-81 (MADESETAVK…DSTQDQPVKM (81 aa)) form a disordered region. 2 positions are modified to phosphoserine: serine 31 and serine 47. Residues 55-66 (KKKKKKQKKKKE) show a composition bias toward basic residues. Serine 83 bears the Phosphoserine mark. Glutamine 118, phenylalanine 119, tryptophan 120, phenylalanine 247, leucine 248, cysteine 249, valine 250, serine 256, arginine 258, valine 259, and alanine 260 together coordinate tetradecanoyl-CoA.

It belongs to the NMT family.

It is found in the cytoplasm. The protein localises to the cytosol. The protein resides in the membrane. The enzyme catalyses N-terminal glycyl-[protein] + tetradecanoyl-CoA = N-tetradecanoylglycyl-[protein] + CoA + H(+). It catalyses the reaction N-terminal glycyl-L-lysyl-[protein] + tetradecanoyl-CoA = N-terminal glycyl-(N(6)-tetradecanoyl)-L-lysyl-[protein] + CoA + H(+). Its function is as follows. Adds a myristoyl group to the N-terminal glycine residue of certain cellular and viral proteins. Also able to mediate N-terminal lysine myristoylation of proteins: catalyzes myristoylation of ARF6 on both 'Gly-2' and 'Lys-3'. Lysine myristoylation is required to maintain ARF6 on membranes during the GTPase cycle. In Rattus norvegicus (Rat), this protein is Glycylpeptide N-tetradecanoyltransferase 1 (Nmt1).